The sequence spans 563 residues: Eukaryotic translation initiation factor 3 subunit D-1 (563 aa).

The tract at residues valine 98–serine 167 is disordered. The segment covering lysine 100–asparagine 121 has biased composition (basic residues). Threonine 128 is subject to Phosphothreonine. The RNA gate stretch occupies residues glutamate 291 to proline 305.

The protein belongs to the eIF-3 subunit D family. As to quaternary structure, component of the eukaryotic translation initiation factor 3 (eIF-3) complex. The eIF-3 complex interacts with pix.

It is found in the cytoplasm. Its function is as follows. mRNA cap-binding component of the eukaryotic translation initiation factor 3 (eIF-3) complex, which is involved in protein synthesis of a specialized repertoire of mRNAs and, together with other initiation factors, stimulates binding of mRNA and methionyl-tRNAi to the 40S ribosome. The eIF-3 complex specifically targets and initiates translation of a subset of mRNAs involved in cell proliferation. In the eIF-3 complex, eif3d specifically recognizes and binds the 7-methylguanosine cap of a subset of mRNAs. This Drosophila virilis (Fruit fly) protein is Eukaryotic translation initiation factor 3 subunit D-1.